Here is a 129-residue protein sequence, read N- to C-terminus: Follitropin subunit beta (129 aa).

An N-terminal signal peptide occupies residues 1 to 20; the sequence is MKTAQFYVLFFCWKAIWCNG. Intrachain disulfides connect Cys-21–Cys-69, Cys-35–Cys-84, Cys-38–Cys-122, Cys-46–Cys-100, Cys-50–Cys-102, and Cys-105–Cys-112. Asn-25 and Asn-42 each carry an N-linked (GlcNAc...) asparagine glycan.

Belongs to the glycoprotein hormones subunit beta family. In terms of assembly, heterodimer. The active follitropin is a heterodimer composed of an alpha chain/CGA shared with other hormones and a unique beta chain/FSHB shown here.

The protein localises to the secreted. Together with the alpha chain CGA constitutes follitropin, the follicle-stimulating hormone, and provides its biological specificity to the hormone heterodimer. Binds FSHR, a G protein-coupled receptor, on target cells to activate downstream signaling pathways. Follitropin is involved in follicle development and spermatogenesis in reproductive organs. In Trichosurus vulpecula (Brush-tailed possum), this protein is Follitropin subunit beta (FSHB).